The chain runs to 151 residues: Transcriptional regulator MraZ (151 aa).

2 consecutive SpoVT-AbrB domains span residues 5–52 (ANAI…PLPE) and 81–124 (AVDL…DEDA).

This sequence belongs to the MraZ family. In terms of assembly, forms oligomers.

The protein localises to the cytoplasm. The protein resides in the nucleoid. This chain is Transcriptional regulator MraZ, found in Pseudomonas aeruginosa (strain LESB58).